The following is a 431-amino-acid chain: Cytochrome c oxidase subunit 3 (431 aa).

Transmembrane regions (helical) follow at residues 70–90, 96–116, 132–152, 176–196, 321–341, 356–376, and 408–428; these read IAPL…FGVI, FVIA…SIVF, LVMG…SFFW, VYSY…SGAI, LYFT…EYYF, FLLT…IGII, and LFYW…IYWW.

It belongs to the cytochrome c oxidase subunit 3 family. Component of the cytochrome c oxidase (complex IV, CIV), a multisubunit enzyme composed of a catalytic core of 3 subunits and several supernumerary subunits. The complex exists as a monomer or a dimer and forms supercomplexes (SCs) in the inner mitochondrial membrane with ubiquinol-cytochrome c oxidoreductase (cytochrome b-c1 complex, complex III, CIII).

It localises to the mitochondrion inner membrane. The enzyme catalyses 4 Fe(II)-[cytochrome c] + O2 + 8 H(+)(in) = 4 Fe(III)-[cytochrome c] + 2 H2O + 4 H(+)(out). Functionally, component of the cytochrome c oxidase, the last enzyme in the mitochondrial electron transport chain which drives oxidative phosphorylation. The respiratory chain contains 3 multisubunit complexes succinate dehydrogenase (complex II, CII), ubiquinol-cytochrome c oxidoreductase (cytochrome b-c1 complex, complex III, CIII) and cytochrome c oxidase (complex IV, CIV), that cooperate to transfer electrons derived from NADH and succinate to molecular oxygen, creating an electrochemical gradient over the inner membrane that drives transmembrane transport and the ATP synthase. Cytochrome c oxidase is the component of the respiratory chain that catalyzes the reduction of oxygen to water. Electrons originating from reduced cytochrome c in the intermembrane space (IMS) are transferred via the dinuclear copper A center (CU(A)) of subunit 2 and heme A of subunit 1 to the active site in subunit 1, a binuclear center (BNC) formed by heme A3 and copper B (CU(B)). The BNC reduces molecular oxygen to 2 water molecules using 4 electrons from cytochrome c in the IMS and 4 protons from the mitochondrial matrix. The polypeptide is Cytochrome c oxidase subunit 3 (cox3) (Dictyostelium citrinum (Slime mold)).